The chain runs to 133 residues: Agouti-signaling protein (133 aa).

A signal peptide spans 1–22 (MDVIHLFLATLLVSLCFLTAYS). A compositionally biased stretch (basic and acidic residues) spans 26 to 36 (PEEKPKDDRSL). A disordered region spans residues 26–83 (PEEKPKDDRSLRNNSSMNLLDSPSVSIMALNKKSKKISRKEAEKKKRSSKKKASMTKV). Residues 37-50 (RNNSSMNLLDSPSV) are compositionally biased toward polar residues. Residues Asn-38 and Asn-39 are each glycosylated (N-linked (GlcNAc...) asparagine). The segment covering 70-79 (KKRSSKKKAS) has biased composition (basic residues). Disulfide bonds link Cys-94–Cys-109, Cys-101–Cys-115, Cys-108–Cys-126, Cys-112–Cys-133, and Cys-117–Cys-124. The Agouti domain maps to 94–133 (CVATRDSCKPPAPACCDPCASCQCRFFRSACSCRVLTRTC).

Its subcellular location is the secreted. In terms of biological role, involved in the regulation of melanogenesis. The binding of ASP to MC1R precludes alpha-MSH initiated signaling and thus blocks production of cAMP, leading to a down-regulation of eumelanogenesis (brown/black pigment) and thus increasing synthesis of pheomelanin (yellow/red pigment). This chain is Agouti-signaling protein (ASIP), found in Equus caballus (Horse).